The sequence spans 301 residues: Rhodopsin (301 aa).

Residues 1-18 (LHMIHLHWYQYPPMNPIM) lie on the Extracellular side of the membrane. Residues 19 to 43 (YPLLLVFMLITGILCLAGNFVTIWV) form a helical membrane-spanning segment. Residues 44–55 (FMNTKSLRTPAN) are Cytoplasmic-facing. Residues 56 to 78 (LLVVNLAMSDFLMMFTMFPPMMI) traverse the membrane as a helical segment. The Extracellular portion of the chain corresponds to 79–92 (TCYYHTWTLGATFC). Cysteine 92 and cysteine 169 are disulfide-bonded. The helical transmembrane segment at 93-115 (QVYAFLGNLCGCASIWTMVFITF) threads the bilayer. Residues 116 to 118 (DRY) carry the 'Ionic lock' involved in activated form stabilization motif. The Cytoplasmic portion of the chain corresponds to 116–134 (DRYNVIVKGVAGEPLSTKK). Residues 135–155 (ATLWILTIWILSTTWCVAPFF) traverse the membrane as a helical segment. Residues 156 to 182 (GWNRYVPEGNLTGCGTDYLSQDILSRS) lie on the Extracellular side of the membrane. Asparagine 165 carries an N-linked (GlcNAc...) asparagine glycan. Residues 183 to 204 (YLYIYSTWVYFLPLAITIYCYV) traverse the membrane as a helical segment. At 205–245 (VIIKAVAAHEKGMRDQAKKMGIKSLRNEEAQKTSAECRLAK) the chain is on the cytoplasmic side. A helical membrane pass occupies residues 246-267 (IAMTTVALWFIAWTPYLLINWV). Topologically, residues 268 to 278 (GMFARSYLSPV) are extracellular. The chain crosses the membrane as a helical span at residues 279 to 300 (YTIWGYVFAKANAVYNPIVYAI). Lysine 288 bears the N6-(retinylidene)lysine mark.

Belongs to the G-protein coupled receptor 1 family. Opsin subfamily. As to quaternary structure, homodimer. Interacts with GNAQ. In terms of processing, contains one covalently linked retinal chromophore.

Its subcellular location is the cell projection. The protein resides in the rhabdomere membrane. Its function is as follows. Photoreceptor required for image-forming vision at low light intensity. Can use both retinal and 3-dehydroretinal as visual pigment. Light-induced isomerization of 11-cis to all-trans retinal triggers a conformational change that activates signaling via G-proteins. Signaling via GNAQ probably mediates the activation of phospholipase C. In Orconectes australis (Southern cave crayfish), this protein is Rhodopsin (RHO).